The primary structure comprises 367 residues: MLNYKKWTQPPNSLIKSIKASRAAYRRLGNSGLLVSNPILGGMHIGDPRWYDWVLDEKDSIALLKAAYDRGINTWDTANIYSNGESERIMGRALRSHNIPRSKVVIMTKCFRAVTDPDVDGDIGSSTAFFPDLTRQSKDYVNHCGLSRASVFQQVEASLRRLNTDYIDVLHIHRFDHHVPPEETMKALHDLVQMNKVRYLGASSMWAHEFAILQHTAEKNNWTKFVSMQNHYNLLYREEEREMIKYCNLTGVGLIPWGPLAAGKLARPPDGKASTFRAINGGAYKDHNPAESEQIARRVHQIAVSRGVPMSHVALAWLNKRVVSPVIGLSSVERMDEVLDARALELSDEEESRLEDPYKAQPPQGHS.

An NADP(+)-binding site is contributed by aspartate 76. Tyrosine 81 (proton donor) is an active-site residue. Histidine 173 provides a ligand contact to substrate. Residues 203-204 (SS), glutamine 229, 258-268 (GPLAAGKLARP), and 330-338 (SSVERMDEV) contribute to the NADP(+) site. Residues 346–367 (LSDEEESRLEDPYKAQPPQGHS) are disordered.

It belongs to the aldo/keto reductase family.

The protein operates within mycotoxin biosynthesis. Its function is as follows. Aldo-keto reductase; part of the gene clusters that mediate the biosynthesis of AM-toxins, host-selective toxins (HSTs) causing Alternaria blotch on apple, a worldwide distributed disease. AM-toxins are cyclic depsipeptides containing the 3 residues 2-hydroxy-isovaleric acid (2-HIV), dehydroalanine, L-alanine which are common for all 3 AM-toxins I to III. The fourth precursor is L-alpha-amino-methoxyphenyl-valeric acid (L-Amv) for AM-toxin I, L-alpha-amino-phenyl-valeric acid (L-Apv) for AM-toxin II, and L-alpha-amino-hydroxyphenyl-valeric acid (L-Ahv) for AM-toxin III. AM-toxins have two target sites for affecting susceptible apple cells; they cause invagination of the plasma membrane and electrolyte loss and chloroplast disorganization. The non-ribosomal peptide synthetase AMT1 contains 4 catalytic modules and is responsible for activation of each residue in AM-toxin. The aldo-keto reductase AMT2 catalyzes the conversion of 2-keto-isovaleric acid (2-KIV) to 2-hydroxy-isovaleric acid (2-HIV), one of the precursor residues incorporated by AMT1 during AM-toxin biosynthesis, by reduction of its ketone to an alcohol. The cytochrome P450 monooxygenase AMT3 and the thioesterase AMT4 are also important for AM-toxin production, but their exact function within the AM-toxin biosynthesis are not known yet. Up to 21 proteins (including AMT1 to AMT4) are predicted to be involved in AM-toxin biosynthesis since their expression ishighly up-regulated in AM-toxin-producing cultures. The chain is Aldo-keto reductase AMT2 from Alternaria alternata (Alternaria rot fungus).